The following is a 423-amino-acid chain: GTPase HflX (423 aa).

Residues 201 to 363 enclose the Hflx-type G domain; that stretch reads IQLALVGYTN…KIEQALKGMM (163 aa). GTP is bound by residues 207 to 214, 232 to 236, 254 to 257, 320 to 323, and 341 to 343; these read GYTNAGKS, FATLD, DTVG, NKAD, and SAY. Mg(2+) contacts are provided by serine 214 and threonine 234.

The protein belongs to the TRAFAC class OBG-HflX-like GTPase superfamily. HflX GTPase family. As to quaternary structure, monomer. Associates with the 50S ribosomal subunit. It depends on Mg(2+) as a cofactor.

It localises to the cytoplasm. In terms of biological role, GTPase that associates with the 50S ribosomal subunit and may have a role during protein synthesis or ribosome biogenesis. The polypeptide is GTPase HflX (Alkalihalophilus pseudofirmus (strain ATCC BAA-2126 / JCM 17055 / OF4) (Bacillus pseudofirmus)).